Here is an 81-residue protein sequence, read N- to C-terminus: Putative membrane protein insertion efficiency factor (81 aa).

This sequence belongs to the UPF0161 family.

It is found in the cell membrane. In terms of biological role, could be involved in insertion of integral membrane proteins into the membrane. The polypeptide is Putative membrane protein insertion efficiency factor (Geobacillus kaustophilus (strain HTA426)).